The chain runs to 887 residues: Alanine--tRNA ligase (887 aa).

Positions 564, 568, 675, and 679 each coordinate Zn(2+). Over residues Gly851–Pro866 the composition is skewed to gly residues. The segment at Gly851–Ala871 is disordered.

It belongs to the class-II aminoacyl-tRNA synthetase family. The cofactor is Zn(2+).

Its subcellular location is the cytoplasm. It carries out the reaction tRNA(Ala) + L-alanine + ATP = L-alanyl-tRNA(Ala) + AMP + diphosphate. Catalyzes the attachment of alanine to tRNA(Ala) in a two-step reaction: alanine is first activated by ATP to form Ala-AMP and then transferred to the acceptor end of tRNA(Ala). Also edits incorrectly charged Ser-tRNA(Ala) and Gly-tRNA(Ala) via its editing domain. The protein is Alanine--tRNA ligase of Rhizorhabdus wittichii (strain DSM 6014 / CCUG 31198 / JCM 15750 / NBRC 105917 / EY 4224 / RW1) (Sphingomonas wittichii).